A 136-amino-acid chain; its full sequence is uncharacterized protein (136 aa).

The next 4 helical transmembrane spans lie at 10-32, 44-66, 70-89, and 102-124; these read SAGI…FIWI, LRCG…ILHF, VLLL…KTLL, and IAGV…WLLF.

Its subcellular location is the cell membrane. This is an uncharacterized protein from Archaeoglobus fulgidus (strain ATCC 49558 / DSM 4304 / JCM 9628 / NBRC 100126 / VC-16).